Here is a 274-residue protein sequence, read N- to C-terminus: tRNA pseudouridine synthase A (274 aa).

Asp51 serves as the catalytic Nucleophile. Tyr109 is a binding site for substrate.

This sequence belongs to the tRNA pseudouridine synthase TruA family. As to quaternary structure, homodimer.

It carries out the reaction uridine(38/39/40) in tRNA = pseudouridine(38/39/40) in tRNA. In terms of biological role, formation of pseudouridine at positions 38, 39 and 40 in the anticodon stem and loop of transfer RNAs. This is tRNA pseudouridine synthase A from Acidovorax ebreus (strain TPSY) (Diaphorobacter sp. (strain TPSY)).